Reading from the N-terminus, the 469-residue chain is NADH-quinone oxidoreductase subunit 13 (469 aa).

14 consecutive transmembrane segments (helical) span residues 1–21 (MVVL…LGLP), 23–43 (ALGV…FLTH), 47–67 (VAHA…AFGL), 69–89 (GLSA…ALVA), 91–111 (VEGR…GLFA), 115–135 (LLVF…MLYL), 144–164 (ALYT…AAVL), 190–210 (AFWV…LFPL), 258–278 (GLLL…AFAA), 284–304 (LLAY…FSGT), 308–328 (AMGG…LFLL), 354–374 (LAAL…LSGF), 390–410 (WLAA…LTAF), and 430–450 (WGFA…PGYF).

The protein belongs to the complex I subunit 4 family. In terms of assembly, NDH-1 is composed of 15 different subunits, Nqo1 to Nqo15. The complex has a L-shaped structure, with the hydrophobic arm (subunits Nqo7, Nqo8 and Nqo10 to Nqo14) embedded in the membrane and the hydrophilic peripheral arm (subunits Nqo1 to Nqo6, Nqo9 and Nqo15) protruding into the bacterial cytoplasm. The hydrophilic domain contains all the redox centers.

It is found in the cell inner membrane. The enzyme catalyses a quinone + NADH + 5 H(+)(in) = a quinol + NAD(+) + 4 H(+)(out). Functionally, NDH-1 shuttles electrons from NADH, via FMN and iron-sulfur (Fe-S) centers, to quinones in the respiratory chain. The immediate electron acceptor for the enzyme in this species is menaquinone. Couples the redox reaction to proton translocation (for every two electrons transferred, four hydrogen ions are translocated across the cytoplasmic membrane), and thus conserves the redox energy in a proton gradient required for the synthesis of ATP. The sequence is that of NADH-quinone oxidoreductase subunit 13 (nqo13) from Thermus thermophilus (strain ATCC 27634 / DSM 579 / HB8).